A 238-amino-acid chain; its full sequence is tRNA (guanine-N(7)-)-methyltransferase (238 aa).

Polar residues predominate over residues 1-12 (MTDTAENQTPND). Residues 1 to 20 (MTDTAENQTPNDRQAGHPRS) form a disordered region. S-adenosyl-L-methionine contacts are provided by glutamate 70, aspartate 95, aspartate 122, and aspartate 145. Residue aspartate 145 is part of the active site. Residues lysine 149, aspartate 181, and 216–219 (TKFE) contribute to the substrate site.

It belongs to the class I-like SAM-binding methyltransferase superfamily. TrmB family.

It carries out the reaction guanosine(46) in tRNA + S-adenosyl-L-methionine = N(7)-methylguanosine(46) in tRNA + S-adenosyl-L-homocysteine. It functions in the pathway tRNA modification; N(7)-methylguanine-tRNA biosynthesis. Its function is as follows. Catalyzes the formation of N(7)-methylguanine at position 46 (m7G46) in tRNA. This is tRNA (guanine-N(7)-)-methyltransferase from Neisseria gonorrhoeae (strain NCCP11945).